The sequence spans 234 residues: Prolactin-6A1 (234 aa).

The first 33 residues, 1-33, serve as a signal peptide directing secretion; that stretch reads MVKSWLRMSKKMEAGTLLMLLMSNILLWENVAS. N-linked (GlcNAc...) asparagine glycosylation is present at N61. Disulfide bonds link C93–C209 and C226–C234.

It belongs to the somatotropin/prolactin family.

The protein resides in the secreted. The sequence is that of Prolactin-6A1 (Prl6a1) from Rattus norvegicus (Rat).